The primary structure comprises 1139 residues: Liprin-alpha (1139 aa).

Coiled-coil stretches lie at residues 30 to 144 (PSDR…SLRM), 172 to 298 (EHHK…KNQI), 329 to 517 (IRDL…AQFQ), and 655 to 701 (QDAQ…EFYD). Disordered regions lie at residues 700–720 (YDDQ…LDNM) and 764–847 (NQFD…DRRK). Composition is skewed to polar residues over residues 704–719 (GIST…QLDN) and 778–787 (PASSVASSTD). SAM domains follow at residues 867–933 (WNGP…MVSL), 952–1016 (NHEY…LKKV), and 1040–1109 (WSNE…LVND).

Belongs to the liprin family. Liprin-alpha subfamily. In terms of tissue distribution, detected in vulval muscle and other cells near the vulva; in neurons located in the lateral ganglion, posterior ganglion, ventral cord and lateral body; and in pharyngeal and body wall muscle cells.

It is found in the synapse. Its function is as follows. May play a role in regulating the structure of the neuronal region, called the active zone, from which synaptic vesicles send neurotransmitter signals across the synapse. This may be in association with the liprin-beta protein hlb-1. This chain is Liprin-alpha, found in Caenorhabditis elegans.